A 184-amino-acid chain; its full sequence is Mitochondrial import inner membrane translocase subunit TIM22 (184 aa).

Residues 1-26 form a disordered region; sequence MSLWGVYTGPQPPKKPLQEMTQEEQA. 2 disulfide bridges follow: cysteine 40-cysteine 118 and cysteine 137-cysteine 156. The next 2 membrane-spanning stretches (helical) occupy residues 45–65 and 151–171; these read VMAGVSGFALGGFFGLFMASM and AALVGCAGFAAFSLAIDMYLN.

The protein belongs to the Tim17/Tim22/Tim23 family. Component of the TIM22 complex, whose core is composed of TIM22 and TIM54, associated with the 70 kDa heterohexamer composed of TIM9 and TIM10 (or TIM8 and TIM13).

The protein resides in the mitochondrion inner membrane. Essential core component of the TIM22 complex, a complex that mediates the import and insertion of multi-pass transmembrane proteins into the mitochondrial inner membrane. In the TIM22 complex, it constitutes the voltage-activated and signal-gated channel. Forms a twin-pore translocase that uses the membrane potential as external driving force in 2 voltage-dependent steps. This Candida albicans (strain SC5314 / ATCC MYA-2876) (Yeast) protein is Mitochondrial import inner membrane translocase subunit TIM22.